Here is a 152-residue protein sequence, read N- to C-terminus: Transcriptional regulator MraZ (152 aa).

SpoVT-AbrB domains are found at residues 5-52 (ATLV…TLPE) and 81-124 (ASEC…DETT).

It belongs to the MraZ family. As to quaternary structure, forms oligomers.

It is found in the cytoplasm. The protein resides in the nucleoid. Functionally, negatively regulates its own expression and that of the subsequent genes in the proximal part of the division and cell wall (dcw) gene cluster. Acts by binding directly to DNA. May also regulate the expression of genes outside the dcw cluster. This Enterobacter sp. (strain 638) protein is Transcriptional regulator MraZ.